The primary structure comprises 607 residues: MNNADRLKRQKSIRNFSIIAHIDHGKSTLADRILEKTGALTSREMKDQTLDAMDLERERGITIKLNAVQLKYTAKDGEEYILHLIDTPGHVDFTYEVSRSLAACEGAVLVVDAAQGIEAQTLANVYLALDNDLEILPIINKIDLPSADVERVRQEIEDVIGLDASEAVPTSAKAGIGIEEILEQIVAKVPAPTGDPEAPLEALIFDSYYDAYRGVVASIRVVNGTVKVGDKIRMMSTGKDFEVLELAVSTPKPLRQKELTVGDVGTLSASIKTVGDVRVGDTITLAKQPAQEALPGYRKMNPMVYCGLYPIDAARYNDLREALERLQLSDAALEFEPETSQALGFGFRCGFLGMLHMEIIQERIEREFNIDMITTAPSVIYHVTTTAGEVLHVDNPSKMPEQQKVEFIEEPYVKAAVMTPNDYVGAIMELCQKKRGTFIDMEYIDTTRVKITYELPLSEIVYDFFDQLKSSTKGYASLDYELIGYQQSRLVKMDILLNNENVDALSFIVHRDFAYERGKVIVDKLKELIPRMQFEVPIQAAVGTKIVARSTIKALRKNVLAKCYGGDISRKRKLLEKQKEGKKRMKMVGSVEVPQEAFMSVLSMDED.

The tr-type G domain maps to 11–193; it reads KSIRNFSIIA…QIVAKVPAPT (183 aa). Residues 23–28 and 140–143 each bind GTP; these read DHGKST and NKID.

Belongs to the TRAFAC class translation factor GTPase superfamily. Classic translation factor GTPase family. LepA subfamily.

It localises to the cell membrane. It catalyses the reaction GTP + H2O = GDP + phosphate + H(+). Required for accurate and efficient protein synthesis under certain stress conditions. May act as a fidelity factor of the translation reaction, by catalyzing a one-codon backward translocation of tRNAs on improperly translocated ribosomes. Back-translocation proceeds from a post-translocation (POST) complex to a pre-translocation (PRE) complex, thus giving elongation factor G a second chance to translocate the tRNAs correctly. Binds to ribosomes in a GTP-dependent manner. The sequence is that of Elongation factor 4 from Exiguobacterium sibiricum (strain DSM 17290 / CCUG 55495 / CIP 109462 / JCM 13490 / 255-15).